The primary structure comprises 3095 residues: HD protein homolog (3095 aa).

5 disordered regions span residues 105–197 (PHQH…NGNA), 536–561 (QQQQQQQQQQQQQQQQHNLTSSTMSG), 1312–1371 (PPQQ…STVI), 1509–1547 (KSTSSSSSSSSTATSPSSSSSSTTTTTTTSTNTTTTTPS), and 2005–2037 (KELTNNNNNNNNNIIEKEEEEKEKEKEKVKEEE). Residues 115-139 (STNLTDHLSQNSVTPSVPTTPNYQQ) show a composition bias toward polar residues. Composition is skewed to low complexity over residues 140-197 (SPST…NGNA) and 536-551 (QQQQQQQQQQQQQQQQ). A compositionally biased stretch (polar residues) spans 552–561 (HNLTSSTMSG). Composition is skewed to low complexity over residues 1315–1368 (QQQQ…LNNS), 1510–1547 (STSSSSSSSSTATSPSSSSSSTTTTTTTSTNTTTTTPS), and 2008–2018 (TNNNNNNNNNI).

Belongs to the huntingtin family.

It localises to the cytoplasm. The protein localises to the nucleus. Its function is as follows. May play a role in microtubule-mediated transport or vesicle function. This chain is HD protein homolog (htt), found in Dictyostelium discoideum (Social amoeba).